A 182-amino-acid chain; its full sequence is Orotate phosphoribosyltransferase (182 aa).

5-phospho-alpha-D-ribose 1-diphosphate is bound by residues Arg91, Lys92, Lys95, His97, and 117–125 (EDVTTTGGS). 2 residues coordinate orotate: Thr121 and Arg149.

The protein belongs to the purine/pyrimidine phosphoribosyltransferase family. PyrE subfamily. In terms of assembly, homodimer. It depends on Mg(2+) as a cofactor.

It carries out the reaction orotidine 5'-phosphate + diphosphate = orotate + 5-phospho-alpha-D-ribose 1-diphosphate. It participates in pyrimidine metabolism; UMP biosynthesis via de novo pathway; UMP from orotate: step 1/2. Its function is as follows. Catalyzes the transfer of a ribosyl phosphate group from 5-phosphoribose 1-diphosphate to orotate, leading to the formation of orotidine monophosphate (OMP). The chain is Orotate phosphoribosyltransferase from Pyrococcus abyssi (strain GE5 / Orsay).